The following is a 132-amino-acid chain: Large ribosomal subunit protein bL17 (132 aa).

The protein belongs to the bacterial ribosomal protein bL17 family. In terms of assembly, part of the 50S ribosomal subunit. Contacts protein L32.

The sequence is that of Large ribosomal subunit protein bL17 from Shewanella woodyi (strain ATCC 51908 / MS32).